A 138-amino-acid chain; its full sequence is Basic phospholipase A2 B (138 aa).

Residues 1–16 (MRALWIVAVLLLGVEG) form the signal peptide. 7 disulfide bridges follow: cysteine 42/cysteine 131, cysteine 44/cysteine 60, cysteine 59/cysteine 111, cysteine 65/cysteine 138, cysteine 66/cysteine 104, cysteine 73/cysteine 97, and cysteine 91/cysteine 102. Residues tyrosine 43, glycine 45, and glycine 47 each contribute to the Ca(2+) site. Residue histidine 63 is part of the active site. A Ca(2+)-binding site is contributed by aspartate 64. Aspartate 105 is an active-site residue.

This sequence belongs to the phospholipase A2 family. Group II subfamily. D49 sub-subfamily. Ca(2+) is required as a cofactor. As to expression, expressed by the venom gland.

It is found in the secreted. It carries out the reaction a 1,2-diacyl-sn-glycero-3-phosphocholine + H2O = a 1-acyl-sn-glycero-3-phosphocholine + a fatty acid + H(+). Its function is as follows. Snake venom phospholipase A2 (PLA2) that shows potent hemolytic activity, and exhibits medium anticoagulant effects by binding to factor Xa (F10) and inhibiting the prothrombinase activity (IC(50) is 90 nM). It is one of the few phospholipases A2 capable of hydrolyzing the phospholipids of E.coli membranes in the presence of a bactericidal/permeability-increasing protein (BPI) of neutrophils. PLA2 catalyzes the calcium-dependent hydrolysis of the 2-acyl groups in 3-sn-phosphoglycerides. This Gloydius halys (Chinese water mocassin) protein is Basic phospholipase A2 B.